A 1053-amino-acid chain; its full sequence is MSESKNSGENTLSVTPTKTLSLKRPVEAGTVRQSFPHGRSKAVVVEKVKRRPIGPGGDGHPAREAAPTPAPAATVTAPPPAQRPAAPNPTAAPTTPPAAAVPNVPPPAPRAEVAPPSAQPAPAAPTAATPPAQPKAEPVPAPIAAQAAPAPVPPVPAPSAPVPSTSAAPAAPKPAPAPVSQAKPIQTAPVQTAPAAQASASQTTGPRPVAAGPRPATGAAKQATATPQRGAASPAQRPQTGGGQRSGGQQRNQSGGRGGPGRGESGSSRTPTGVVLRSLTDEEREARARALSGARIREEEDRKRAAAEAKAREEREAREREERAAAEARKAEEDARRLQEQEAKRRSEQEAKRRLSGGEPAPAASPSVARKPVMTATAAAPAAAAPSGRAAVTDEEETKRVIRRPGMPTKVIVPPRPTKGAEPKSRGRLTVATATGGEEEERTRSVAAFRRRQQRLRGHVNEVKEKLSREVILPETITIQELANRMSERGVDVIKLLMKQGQMAKITDVIDADTAQLIAEELGHTVKRVAESDVEEGLFDTVDVEEHLVPRPPVVTIMGHVDHGKTSLLDAIRHANVVSGEAGGITQHIGAYQITAPNGSPITFIDTPGHAAFTAMRARGAKVTDIVVLVVAADDGVMPQTAEAVAHARAAGVPIIVAINKIDKPDAKPERIRSELLQYEVQVESLGGDTLEVEVSATKKINLDKLLDLIALQAELLDLKANPDRAAEGTVIEASLDKGRGPVATVLVQRGTLRVGDIIVGGTHWGHVRALIDDKGATRSEAGPSMPVEVLGFSGSPEAGDRVAVVETEARAREITEYRERQRREQAAARGGQARGSLADMMSQLKNAGRKEFPLVIKGDVQGSVEAVVATLEKLNTDEVAARIIHAGVGGITESDITLAQAAGAVVLGFNVRALKEARALAEQQGIEIRYYNIIYNLVDDVKAAMSGLLAPTLREEMLGNAEILEVFNISKVGKVAGCRVTDGRVERGAHVRLIRDNVVVHEGKLSTLKRFKDEVKEVVAGQECGMAFESYQDMRPHDVIECYNVHEIKRSL.

Residues 1–20 show a composition bias toward polar residues; the sequence is MSESKNSGENTLSVTPTKTL. A disordered region spans residues 1 to 442; the sequence is MSESKNSGEN…TATGGEEEER (442 aa). Low complexity-rich tracts occupy residues 64-76 and 83-102; these read EAAPTPAPAATVT and RPAAPNPTAAPTTPPAAAVP. Composition is skewed to pro residues over residues 131 to 141 and 150 to 161; these read PAQPKAEPVPA and APVPPVPAPSAP. Low complexity predominate over residues 178–220; sequence PVSQAKPIQTAPVQTAPAAQASASQTTGPRPVAAGPRPATGAA. A compositionally biased stretch (gly residues) spans 255–264; that stretch reads GGRGGPGRGE. 2 stretches are compositionally biased toward basic and acidic residues: residues 279 to 288 and 295 to 353; these read LTDEEREARA and RIRE…EAKR. The segment covering 375–386 has biased composition (low complexity); that stretch reads TATAAAPAAAAP. Residues 550–720 enclose the tr-type G domain; sequence PRPPVVTIMG…ALQAELLDLK (171 aa). The interval 559-566 is G1; it reads GHVDHGKT. 559–566 is a binding site for GTP; that stretch reads GHVDHGKT. The tract at residues 584-588 is G2; it reads GITQH. The segment at 606-609 is G3; it reads DTPG. GTP-binding positions include 606-610 and 660-663; these read DTPGH and NKID. The interval 660 to 663 is G4; it reads NKID. The segment at 696-698 is G5; it reads SAT.

The protein belongs to the TRAFAC class translation factor GTPase superfamily. Classic translation factor GTPase family. IF-2 subfamily.

It is found in the cytoplasm. In terms of biological role, one of the essential components for the initiation of protein synthesis. Protects formylmethionyl-tRNA from spontaneous hydrolysis and promotes its binding to the 30S ribosomal subunits. Also involved in the hydrolysis of GTP during the formation of the 70S ribosomal complex. This chain is Translation initiation factor IF-2, found in Beijerinckia indica subsp. indica (strain ATCC 9039 / DSM 1715 / NCIMB 8712).